The sequence spans 263 residues: uncharacterized protein (263 aa).

Residues 6 to 121 (TAIIADDEPL…RLQTTCERVK (116 aa)) form the Response regulatory domain. 4-aspartylphosphate is present on D58. Residues 158 to 263 (IKATQGDDIH…RASQSLFKGM (106 aa)) form the HTH LytTR-type domain.

This is an uncharacterized protein from Vibrio parahaemolyticus serotype O3:K6 (strain RIMD 2210633).